Here is an 89-residue protein sequence, read N- to C-terminus: uncharacterized protein (89 aa).

The chain crosses the membrane as a helical span at residues 39-61 (FVCFWSIWFWTGDISFSLLSMLV).

It is found in the membrane. This is an uncharacterized protein from Saccharomyces cerevisiae (strain ATCC 204508 / S288c) (Baker's yeast).